Here is a 664-residue protein sequence, read N- to C-terminus: Methionine--tRNA ligase (664 aa).

A 'HIGH' region motif is present at residues Pro-13–His-23. Zn(2+) is bound by residues Cys-144, Cys-147, Cys-156, and Cys-160. Residues Lys-327 to Ser-331 carry the 'KMSKS' region motif. Lys-330 is a binding site for ATP. A tRNA-binding domain is found at Glu-566–Arg-664.

It belongs to the class-I aminoacyl-tRNA synthetase family. MetG type 1 subfamily. As to quaternary structure, homodimer. Requires Zn(2+) as cofactor.

The protein localises to the cytoplasm. It catalyses the reaction tRNA(Met) + L-methionine + ATP = L-methionyl-tRNA(Met) + AMP + diphosphate. Its function is as follows. Is required not only for elongation of protein synthesis but also for the initiation of all mRNA translation through initiator tRNA(fMet) aminoacylation. The chain is Methionine--tRNA ligase from Methanoculleus marisnigri (strain ATCC 35101 / DSM 1498 / JR1).